Reading from the N-terminus, the 327-residue chain is 4-diphosphocytidyl-2-C-methyl-D-erythritol kinase (327 aa).

Lys14 is an active-site residue. Position 97-107 (97-107 (PDGAGLGGGSA)) interacts with ATP. Asp140 is a catalytic residue.

This sequence belongs to the GHMP kinase family. IspE subfamily.

The catalysed reaction is 4-CDP-2-C-methyl-D-erythritol + ATP = 4-CDP-2-C-methyl-D-erythritol 2-phosphate + ADP + H(+). It functions in the pathway isoprenoid biosynthesis; isopentenyl diphosphate biosynthesis via DXP pathway; isopentenyl diphosphate from 1-deoxy-D-xylulose 5-phosphate: step 3/6. In terms of biological role, catalyzes the phosphorylation of the position 2 hydroxy group of 4-diphosphocytidyl-2C-methyl-D-erythritol. The polypeptide is 4-diphosphocytidyl-2-C-methyl-D-erythritol kinase (Oleidesulfovibrio alaskensis (strain ATCC BAA-1058 / DSM 17464 / G20) (Desulfovibrio alaskensis)).